The primary structure comprises 501 residues: Cryptochrome-1 (501 aa).

Residues 5-134 enclose the Photolyase/cryptochrome alpha/beta domain; that stretch reads KKTIVWFRRD…SVQSYNGDLC (130 aa). FAD-binding positions include Y231 and 243–247; that span reads TSLLS. R356 is an ATP binding site. FAD-binding residues include D386 and D388. D405 is a binding site for ATP.

Belongs to the DNA photolyase class-1 family. Homodimer. Requires FAD as cofactor. The cofactor is (6R)-5,10-methylene-5,6,7,8-tetrahydrofolate.

Mediates blue light-induced gene expression in addition to its role in blue light-dependent inhibition of stem growth. This Sinapis alba (White mustard) protein is Cryptochrome-1 (PHR1).